Reading from the N-terminus, the 411-residue chain is Corticotropin-releasing factor receptor 2 (411 aa).

Positions 1–19 (MDAALLLSLLEANCSLALA) form a signal peptide, not cleaved. The Extracellular portion of the chain corresponds to 1–108 (MDAALLLSLL…EPILDDKQRK (108 aa)). N-linked (GlcNAc...) asparagine glycosylation is found at N13, N41, N74, N86, and N94. 3 disulfides stabilise this stretch: C14–C50, C40–C83, and C64–C98. Residues 109-139 (YDLHYRIALIINYLGHCVSVVALVAAFLLFL) form a helical membrane-spanning segment. Topologically, residues 140–146 (VLRSIRC) are cytoplasmic. The chain crosses the membrane as a helical span at residues 147–171 (LRNVIHWNLITTFILRNITWFLLQL). Residues 172-185 (IDHEVHEGNEVWCR) are Extracellular-facing. Residues C184 and C254 are joined by a disulfide bond. A helical membrane pass occupies residues 186–214 (CVTTIFNYFVVTNFFWMFVEGCYLHTAIV). Residues 215-221 (MTYSTEH) are Cytoplasmic-facing. The chain crosses the membrane as a helical span at residues 222-249 (LRKWLFLFIGWCIPCPIIVAWAVGKLYY). Topologically, residues 250-265 (ENEQCWFGKEPGDLVD) are extracellular. The chain crosses the membrane as a helical span at residues 266–291 (YIYQGPIILVLLINFVFLFNIVRILM). The Cytoplasmic portion of the chain corresponds to 292–302 (TKLRASTTSET). A helical transmembrane segment spans residues 303 to 327 (IQYRKAVKATLVLLPLLGITYMLFF). Residues 328–334 (VNPGEDD) are Extracellular-facing. The helical transmembrane segment at 335 to 364 (LSQIVFIYFNSFLQSFQGFFVSVFYCFFNG) threads the bilayer. Over 365–411 (EVRSALRKRWHRWQDHHALRVPVARAMSIPTSPTRISFHSIKQTAAV) the chain is Cytoplasmic.

Belongs to the G-protein coupled receptor 2 family. As to quaternary structure, monomer. Interacts (via N-terminal extracellular domain) with CRF, UCN, UCN2 and UCN3. An N-glycosylation site within the signal peptide impedes its proper cleavage and function. In terms of tissue distribution, predominantly expressed in limbic regions of the brain such as the lateral septum, the entorhinal cortex, the hypothalamic ventromedial nucleus and several amygdaloid nuclei. Also detectable in lung, kidney and heart.

It localises to the cell membrane. Its function is as follows. G-protein coupled receptor for CRH (corticotropin-releasing factor), UCN (urocortin), UCN2 and UCN3. Has high affinity for UCN. Ligand binding causes a conformation change that triggers signaling via guanine nucleotide-binding proteins (G proteins) and down-stream effectors, such as adenylate cyclase. Promotes the activation of adenylate cyclase, leading to increased intracellular cAMP levels. The protein is Corticotropin-releasing factor receptor 2 (Crhr2) of Rattus norvegicus (Rat).